The primary structure comprises 386 residues: Indole-3-acetate O-methyltransferase 1 (386 aa).

Y30 contributes to the S-adenosyl-L-methionine binding site. Substrate contacts are provided by residues Y30 and 33-37 (NSQAQ). Residues G72, 72 to 73 (GC), N78, 108 to 111 (FSDL), D110, 152 to 154 (SFY), and 169 to 171 (AFS) each bind S-adenosyl-L-methionine. 170–174 (FSLHW) contributes to the substrate binding site. Mg(2+)-binding residues include N191, V195, R277, D278, F280, and N281. Position 334 (S334) interacts with substrate.

The protein belongs to the methyltransferase superfamily. SABATH family. In terms of assembly, homodimer. It depends on Mg(2+) as a cofactor. In terms of tissue distribution, expressed in seedling roots and leaves. Expressed in the stigma, funiculus, and vascular bundles in sepals, petals and stamens.

The enzyme catalyses (indol-3-yl)acetate + S-adenosyl-L-methionine = methyl (indol-3-yl)acetate + S-adenosyl-L-homocysteine. In terms of biological role, catalyzes the methylation of the free carboxyl end of the plant hormone indole-3-acetic acid (IAA). Converts IAA to IAA methyl ester (MeIAA). Regulates IAA activities by IAA methylation. Methylation of IAA plays an important role in regulating plant development and auxin homeostasis. Required for correct leaf pattern formation. MeIAA seems to be an inactive form of IAA. This is Indole-3-acetate O-methyltransferase 1 (IAMT1) from Arabidopsis thaliana (Mouse-ear cress).